The primary structure comprises 35 residues: Protein YbgU (35 aa).

In Escherichia coli (strain K12), this protein is Protein YbgU.